The primary structure comprises 384 residues: GDP-mannose transporter (384 aa).

Topologically, residues 1 to 40 (MVEDKKTDDYTIEMDKMDQGSKNFEAAAPPPQPRTPPAGS) are cytoplasmic. The chain crosses the membrane as a helical span at residues 41–61 (ISNNPILPVLAYCGSSILMTV). Residues 62–69 (MNKYVLSG) lie on the Lumenal side of the membrane. A helical membrane pass occupies residues 70-90 (LDFNLNFFLLCVQSIVCIVAI). Over 91–110 (QTCKSCGLITYRDFSADEAR) the chain is Cytoplasmic. Residues 111-127 (KWFPITLLLIGMIYTGS) form a helical membrane-spanning segment. Topologically, residues 128–134 (KALQFLS) are lumenal. A helical membrane pass occupies residues 135–151 (IPVYTIFKNLTIILIAY). Residues 152-160 (GEVLWFGGS) lie on the Cytoplasmic side of the membrane. Residues 161 to 182 (VTGLTLFSFGLMVLSSIIAAWA) traverse the membrane as a helical segment. Residues 183 to 200 (DIKHAVESTGDATAKVST) are Lumenal-facing. A helical transmembrane segment spans residues 201-221 (LNAGYIWMLVNCLCTSSYVLG). Residues 222-236 (MRKRIKLTNFKDFDT) lie on the Cytoplasmic side of the membrane. The helical transmembrane segment at 237–257 (LAMFYNNLLSIPVLIVLTGLM) threads the bilayer. At 258–276 (EDWSSANITRNFPPADRNN) the chain is on the lumenal side. Asparagine 264 is a glycosylation site (N-linked (GlcNAc...) asparagine). Residues 277-297 (IIFAMILSGLSSVFISYTSAW) form a helical membrane-spanning segment. The Cytoplasmic segment spans residues 298-305 (CVRVTSST). Residues 306-326 (TYSMVGALNKLPIALSGLIFF) form a helical membrane-spanning segment. The Lumenal segment spans residues 327–329 (DAP). A helical transmembrane segment spans residues 330–350 (VTFPSVSAIVVGFVSGIVYAV). Topologically, residues 351-384 (AKIKQNAKPKTGVLPMSNPPVSASSQSMRDSLRS) are cytoplasmic. Residues 364-384 (LPMSNPPVSASSQSMRDSLRS) form a disordered region. The segment covering 369 to 384 (PPVSASSQSMRDSLRS) has biased composition (polar residues).

This sequence belongs to the TPT transporter family. SLC35D subfamily. In terms of assembly, homooligomer.

Its subcellular location is the golgi apparatus membrane. It is found in the cytoplasmic vesicle membrane. The protein localises to the endoplasmic reticulum membrane. In terms of biological role, involved in the import of GDP-mannose from the cytoplasm into the Golgi lumen. This is GDP-mannose transporter (gmt1) from Aspergillus terreus (strain NIH 2624 / FGSC A1156).